Reading from the N-terminus, the 224-residue chain is Large ribosomal subunit protein uL4 (224 aa).

The tract at residues 53 to 74 is disordered; that stretch reads RNRSEVSHSTKKPFKQKGTGNA.

This sequence belongs to the universal ribosomal protein uL4 family. In terms of assembly, part of the 50S ribosomal subunit.

Its function is as follows. One of the primary rRNA binding proteins, this protein initially binds near the 5'-end of the 23S rRNA. It is important during the early stages of 50S assembly. It makes multiple contacts with different domains of the 23S rRNA in the assembled 50S subunit and ribosome. Functionally, forms part of the polypeptide exit tunnel. The protein is Large ribosomal subunit protein uL4 of Chlamydia pneumoniae (Chlamydophila pneumoniae).